Reading from the N-terminus, the 98-residue chain is Large ribosomal subunit protein uL23 (98 aa).

It belongs to the universal ribosomal protein uL23 family. In terms of assembly, part of the 50S ribosomal subunit. Contacts protein L29, and trigger factor when it is bound to the ribosome.

In terms of biological role, one of the early assembly proteins it binds 23S rRNA. One of the proteins that surrounds the polypeptide exit tunnel on the outside of the ribosome. Forms the main docking site for trigger factor binding to the ribosome. This is Large ribosomal subunit protein uL23 from Streptococcus equi subsp. equi (strain 4047).